Reading from the N-terminus, the 599-residue chain is Leishmanolysin (599 aa).

Positions 1–39 (MSVDSSSTHRHRSVAARLVRLAAAGAAVIAAVGTAAAWA) are cleaved as a signal peptide. Positions 40–97 (HAGAVQHRCIHDAMQARVRQSVARHHTAPGAVSAVGLPYVTLDTAAAADRRPGSAPTV) are cleaved as a propeptide — activation peptide. Cystine bridges form between Cys122–Cys139 and Cys188–Cys227. His261 contacts Zn(2+). The active site involves Glu262. His265 is a Zn(2+) binding site. An N-linked (GlcNAc...) asparagine glycan is attached at Asn297. 7 disulfide bridges follow: Cys311-Cys383, Cys390-Cys452, Cys403-Cys422, Cys412-Cys486, Cys463-Cys507, Cys512-Cys562, and Cys532-Cys555. Position 331 (His331) interacts with Zn(2+). An N-linked (GlcNAc...) asparagine glycan is attached at Asn394. The GPI-anchor amidated asparagine moiety is linked to residue Asn574. The propeptide at 575-599 (AAAGRRGPRAAATALLVAALLAVAL) is removed in mature form.

This sequence belongs to the peptidase M8 family. It depends on Zn(2+) as a cofactor.

It localises to the cell membrane. It catalyses the reaction Preference for hydrophobic residues at P1 and P1' and basic residues at P2' and P3'. A model nonapeptide is cleaved at -Ala-Tyr-|-Leu-Lys-Lys-.. Functionally, has an integral role during the infection of macrophages in the mammalian host. This is Leishmanolysin (gp63) from Leishmania chagasi.